Here is a 391-residue protein sequence, read N- to C-terminus: Phosphoglycerate kinase (391 aa).

Substrate-binding positions include 21–23 (DLN), Arg36, 59–62 (HLGR), Arg113, and Arg146. Residues Lys197, Glu319, and 345–348 (GGDT) each bind ATP.

Belongs to the phosphoglycerate kinase family. Monomer.

It localises to the cytoplasm. It carries out the reaction (2R)-3-phosphoglycerate + ATP = (2R)-3-phospho-glyceroyl phosphate + ADP. Its pathway is carbohydrate degradation; glycolysis; pyruvate from D-glyceraldehyde 3-phosphate: step 2/5. This Pseudoalteromonas translucida (strain TAC 125) protein is Phosphoglycerate kinase.